The chain runs to 314 residues: Deacetoxycephalosporin C synthase (314 aa).

The 114-residue stretch at 156 to 269 (DCEPLLRLRY…RTSSVFFLRP (114 aa)) folds into the Fe2OG dioxygenase domain.

The protein belongs to the iron/ascorbate-dependent oxidoreductase family. Fe cation is required as a cofactor. Requires L-ascorbate as cofactor.

It carries out the reaction penicillin N + 2-oxoglutarate + O2 = deacetoxycephalosporin C + succinate + CO2 + H2O. It participates in antibiotic biosynthesis; cephalosporin C biosynthesis. Functionally, catalyzes the step from penicillin N to deacetoxy-cephalosporin C. The chain is Deacetoxycephalosporin C synthase (cefE) from Amycolatopsis lactamdurans (Nocardia lactamdurans).